Consider the following 186-residue polypeptide: Large ribosomal subunit protein uL10 (186 aa).

Belongs to the universal ribosomal protein uL10 family. Part of the ribosomal stalk of the 50S ribosomal subunit. The N-terminus interacts with L11 and the large rRNA to form the base of the stalk. The C-terminus forms an elongated spine to which L12 dimers bind in a sequential fashion forming a multimeric L10(L12)X complex.

Functionally, forms part of the ribosomal stalk, playing a central role in the interaction of the ribosome with GTP-bound translation factors. This is Large ribosomal subunit protein uL10 from Nitrosococcus oceani (strain ATCC 19707 / BCRC 17464 / JCM 30415 / NCIMB 11848 / C-107).